The chain runs to 85 residues: uncharacterized protein (85 aa).

Helical transmembrane passes span 20–42 and 52–69; these read IYWF…TTFL and IILR…KHYY.

Its subcellular location is the membrane. This is an uncharacterized protein from Saccharomyces cerevisiae (strain ATCC 204508 / S288c) (Baker's yeast).